The sequence spans 264 residues: ATP synthase subunit b 1 (264 aa).

The helical transmembrane segment at 2-22 threads the bilayer; that stretch reads LFDWFTFWAQLLNFLILVWLL. A disordered region spans residues 240-264; that stretch reads ASSALLDGPDDEMNEEEGHAGKDAD. The segment covering 255–264 has biased composition (basic and acidic residues); sequence EEGHAGKDAD.

The protein belongs to the ATPase B chain family. F-type ATPases have 2 components, F(1) - the catalytic core - and F(0) - the membrane proton channel. F(1) has five subunits: alpha(3), beta(3), gamma(1), delta(1), epsilon(1). F(0) has four main subunits: a(1), b(2) and c(10-14). The alpha and beta chains form an alternating ring which encloses part of the gamma chain. F(1) is attached to F(0) by a central stalk formed by the gamma and epsilon chains, while a peripheral stalk is formed by the delta and b chains.

It is found in the cell inner membrane. Functionally, f(1)F(0) ATP synthase produces ATP from ADP in the presence of a proton or sodium gradient. F-type ATPases consist of two structural domains, F(1) containing the extramembraneous catalytic core and F(0) containing the membrane proton channel, linked together by a central stalk and a peripheral stalk. During catalysis, ATP synthesis in the catalytic domain of F(1) is coupled via a rotary mechanism of the central stalk subunits to proton translocation. In terms of biological role, component of the F(0) channel, it forms part of the peripheral stalk, linking F(1) to F(0). The polypeptide is ATP synthase subunit b 1 (Chlorobium luteolum (strain DSM 273 / BCRC 81028 / 2530) (Pelodictyon luteolum)).